The sequence spans 347 residues: HTH-type transcriptional regulator PhcA (347 aa).

An HTH lysR-type domain is found at 1–61; that stretch reads MVNVDTKLLV…IRVPHGLTPT (61 aa). Positions 21–40 form a DNA-binding region, H-T-H motif; the sequence is ATYVAEKMHMTAPAVSHSLG. The segment at 316 to 347 is disordered; sequence PMHPPMLTDDSGKSGKTGKGDAEKEDESRLSV. A compositionally biased stretch (basic and acidic residues) spans 325 to 347; the sequence is DSGKSGKTGKGDAEKEDESRLSV.

This sequence belongs to the LysR transcriptional regulatory family.

Functionally, regulates the transcription of one or more of the genes involved in virulence. The chain is HTH-type transcriptional regulator PhcA (phcA) from Ralstonia nicotianae (strain ATCC BAA-1114 / GMI1000) (Ralstonia solanacearum).